The primary structure comprises 216 residues: Somatotropin (216 aa).

A signal peptide spans 1-26 (MAAGPRTSVLLAFGLLCLPWPQDVGA). Position 45 (His-45) interacts with Zn(2+). An intrachain disulfide couples Cys-78 to Cys-189. Ser-131 carries the post-translational modification Phosphoserine. Glu-198 contacts Zn(2+). Cys-206 and Cys-214 are joined by a disulfide.

It belongs to the somatotropin/prolactin family.

The protein localises to the secreted. In terms of biological role, plays an important role in growth control. Its major role in stimulating body growth is to stimulate the liver and other tissues to secrete IGF1. It stimulates both the differentiation and proliferation of myoblasts. It also stimulates amino acid uptake and protein synthesis in muscle and other tissues. This Equus caballus (Horse) protein is Somatotropin (GH1).